Here is a 66-residue protein sequence, read N- to C-terminus: uncharacterized protein (66 aa).

The HTH cro/C1-type domain maps to 5–59 (VKELRARFGYSQEKLGETVGVTRQTVAAIEKGDYVPSLLLALKICKAFSMKMEDV). The segment at residues 16–35 (QEKLGETVGVTRQTVAAIEK) is a DNA-binding region (H-T-H motif).

This is an uncharacterized protein from Bacillus subtilis (strain 168).